The following is a 364-amino-acid chain: Peptidyl-prolyl cis-trans isomerase D (364 aa).

One can recognise a PPIase cyclophilin-type domain in the interval 7-170 (YFDITIGNKP…EDAVIAKCGE (164 aa)). 3 TPR repeats span residues 208–241 (ATHL…LNEK), 261–294 (IPCY…DSKY), and 301–334 (TKAY…DPED).

The protein belongs to the cyclophilin-type PPIase family. PPIase D subfamily.

The protein resides in the cytoplasm. The catalysed reaction is [protein]-peptidylproline (omega=180) = [protein]-peptidylproline (omega=0). Its function is as follows. PPIases accelerate the folding of proteins. It catalyzes the cis-trans isomerization of proline imidic peptide bonds in oligopeptides. This is Peptidyl-prolyl cis-trans isomerase D (cyp12) from Rhizopus delemar (strain RA 99-880 / ATCC MYA-4621 / FGSC 9543 / NRRL 43880) (Mucormycosis agent).